Reading from the N-terminus, the 402-residue chain is Putative epoxide hydrolase AFT8 (402 aa).

Belongs to the peptidase S33 family.

The protein operates within mycotoxin biosynthesis. Its function is as follows. Putative epoxide hydrolase; part of the gene clusters that mediate the biosynthesis of the host-selective toxins (HSTs) AF-toxins responsible for Alternaria black spot of strawberry disease by the strawberry pathotype. AF-toxin I and III are valine derivatives of 2,3-dyhydroxy-isovaleric acid and 2-hydroxy-isovaleric acid respectively, while AF II is an isoleucine derivative of 2-hydroxy-valeric acid. These derivatives are bound to a 9,10-epoxy-8-hydroxy-9-methyl-decatrienoic acid (EDA) moiety. On cellular level, AF-toxins affect plasma membrane of susceptible cells and cause a sudden increase in loss of K(+) after a few minutes of toxin treatment. The aldo-keto reductase AFTS1 catalyzes the conversion of 2-keto-isovaleric acid (2-KIV) to 2-hydroxy-isovaleric acid (2-HIV) by reduction of its ketone to an alcohol. The acyl-CoA ligase AFT1, the hydrolase AFT2 and the enoyl-CoA hydratases AFT3 and AFT6, but also the polyketide synthase AFT9, the acyl-CoA dehydrogenase AFT10, the cytochrome P450 monooxygenase AFT11 and the oxidoreductase AFT12 are all involved in the biosynthesis of the AK-, AF- and ACT-toxin common EDA structural moiety. The exact function of each enzyme, and of additional enzymes identified within the AF-toxin clusters have still to be determined. The chain is Putative epoxide hydrolase AFT8 from Alternaria alternata (Alternaria rot fungus).